A 575-amino-acid polypeptide reads, in one-letter code: MISGILASPGIAFGKALLLKEDEIVIDRKKISADQVDQEVERFLSGRAKASAQLETIKTKAGETFGEEKEAIFEGHIMLLEDEELEQEIIALIKDKHMTADAAAHEVIEGQASALEELDDEYLKERAADVRDIGKRLLRNILGLKIIDLSAIQDEVILVAADLTPSETAQLNLKKVLGFITDAGGRTSHTSIMARSLELPAIVGTGSVTSQVKNDDYLILDAVNNQVYVNPTNEVIDKMRAVQEQVASEKAELAKLKDLPAITLDGHQVEVCANIGTVRDVEGAERNGAEGVGLYRTEFLFMDRDALPTEEEQFAAYKAVAEACGSQAVIVRTMDIGGDKELPYMNFPKEENPFLGWRAIRIAMDRREILRDQLRAILRASAFGKLRIMFPMIISVEEVRALRKEIEIYKQELRDEGKAFDESIEIGVMVETPAAATIARHLAKEVDFFSIGTNDLTQYTLAVDRGNDMISHLYQPMSPSVLNLIKQVIDASHAEGKWTGMCGELAGDERATLLLLGMGLDEFSMSAISIPRIKKIIRNTNFEDAKVLAEQALAQPTTDELMTLVNKFIEEKTIC.

Residue Tyr122 is modified to Phosphotyrosine. His189 acts as the Tele-phosphohistidine intermediate in catalysis. Phosphoenolpyruvate-binding residues include Arg296 and Arg332. Positions 431 and 455 each coordinate Mg(2+). Phosphoenolpyruvate contacts are provided by residues 454-455 (ND) and Arg465. Cys502 acts as the Proton donor in catalysis.

This sequence belongs to the PEP-utilizing enzyme family. As to quaternary structure, homodimer. Interacts with the pole-localizer protein TmaR. Binding to TmaR is reversible as long as TmaR can get phosphorylated, whereas binding to non-phosphorylated TmaR is very strong and shifts the equilibrium toward binding. Requires Mg(2+) as cofactor. Phosphorylated on Tyr-122. Phosphorylation on Tyr-122 is important for polar localization but not for interaction with TmaR and for activity.

It is found in the cytoplasm. It carries out the reaction L-histidyl-[protein] + phosphoenolpyruvate = N(pros)-phospho-L-histidyl-[protein] + pyruvate. Inhibited by oxalate. Functionally, general (non sugar-specific) component of the phosphoenolpyruvate-dependent sugar phosphotransferase system (sugar PTS). This major carbohydrate active-transport system catalyzes the phosphorylation of incoming sugar substrates concomitantly with their translocation across the cell membrane. Enzyme I transfers the phosphoryl group from phosphoenolpyruvate (PEP) to the phosphoryl carrier protein (HPr). Can also use (Z)-3-fluoro-PEP (ZFPEP), (Z)-3-methyl-PEP (ZMePEP), (Z)-3-chloro-PEP (ZClPEP) and (E)-3-chloro-PEP (EClPEP) as alternative phosphoryl donors. The sequence is that of Phosphoenolpyruvate-protein phosphotransferase from Escherichia coli (strain K12).